A 576-amino-acid polypeptide reads, in one-letter code: F-actin capping regulator BSP1 (576 aa).

Residues 24-50 (RYSNIPSSKPAGEALSPVRSHNSGEYR) are disordered. 3 positions are modified to phosphoserine: Ser-46, Ser-79, and Ser-88. Disordered regions lie at residues 132 to 160 (NDSN…PREK) and 173 to 316 (GRAD…KRIP). Ser-185 is subject to Phosphoserine. A compositionally biased stretch (basic and acidic residues) spans 191–206 (TRRDHIKITDGNEEKP). The residue at position 220 (Ser-220) is a Phosphoserine. 2 stretches are compositionally biased toward polar residues: residues 243–255 (SRST…LSSL) and 264–279 (KSYN…TVKS). Residues 304 to 313 (KPTPPSPPAK) are compositionally biased toward pro residues. Phosphoserine occurs at positions 309 and 320. Positions 408 to 470 (SIPEAIKGIQ…LSLRNNLKKR (63 aa)) are interaction with F-actin. Residues 541–576 (DKYTTSRDETVKETKPLVHPNKNRTRGPRRKLPTRV) are disordered. Over residues 544–556 (TTSRDETVKETKP) the composition is skewed to basic and acidic residues. The tract at residues 547 to 576 (RDETVKETKPLVHPNKNRTRGPRRKLPTRV) is interaction with the F-actin capping complex. Over residues 561–576 (NKNRTRGPRRKLPTRV) the composition is skewed to basic residues.

As to quaternary structure, interacts (via C-terminus) with the CAP1-CAP2 F-actin capping protein complex. Interacts with INP52 (via SAC domain); the interaction is direct. Interacts with INP53 (via SAC domain); the interaction is direct. Interacts with RVS167. Interacts with SLA1. Phosphorylated by CDC28.

The protein resides in the cytoplasm. The protein localises to the cytoskeleton. Its subcellular location is the actin patch. It localises to the cell membrane. Its function is as follows. Recruits the capping protein complex to actin patches and the actomyosin contractile ring, and/or stabilizes their interaction. May serve as an adapter to link INP52 and INP53 to the cortical actin cytoskeleton. Binds F-actin. In Saccharomyces cerevisiae (strain ATCC 204508 / S288c) (Baker's yeast), this protein is F-actin capping regulator BSP1 (BSP1).